The chain runs to 400 residues: Carnosine N-methyltransferase (400 aa).

The interval 1 to 49 (MQRRRRAPPASQPAQDSGHSEEVEVQFSAGRLGSAAPAGPPVRGTAEDE) is disordered. Residues Gln155, Arg158, Gly199, Glu220, Asp286, Phe287, and Cys303 each contribute to the S-adenosyl-L-methionine site. Asp307 provides a ligand contact to carnosine. Position 315 (Tyr315) interacts with S-adenosyl-L-methionine. His338 and Tyr389 together coordinate carnosine.

The protein belongs to the carnosine N-methyltransferase family. Homodimer. Each monomer accommodates one molecule of carnosine in its active pocket, precisely anchoring the histidine imidazole ring such that only N1 is exposed and deprotonated for methylation. As to expression, expressed at higher level in skeletal muscle compared to other tissues.

The protein resides in the cytoplasm. The protein localises to the cytosol. It is found in the nucleus. It carries out the reaction carnosine + S-adenosyl-L-methionine = anserine + S-adenosyl-L-homocysteine + H(+). Functionally, N-methyltransferase that catalyzes the formation of anserine (beta-alanyl-N(Pi)-methyl-L-histidine) from carnosine. Anserine, a methylated derivative of carnosine (beta-alanyl-L-histidine), is an abundant constituent of vertebrate skeletal muscles. Also methylates other L-histidine-containing di- and tripeptides such as Gly-Gly-His, Gly-His and homocarnosine (GABA-His). In Rattus norvegicus (Rat), this protein is Carnosine N-methyltransferase.